Consider the following 847-residue polypeptide: Pep5-like zinc finger protein C16A10.03c (847 aa).

The CHCR repeat unit spans residues 387-526 (YIEAIPFSDS…GIWLFNSDPM (140 aa)). The segment at 780-814 (CDNCEGLLDVPFVSYSCLHLVHRDCATETVCPKCK) adopts an RING-type; atypical zinc-finger fold.

The protein localises to the cytoplasm. Its subcellular location is the nucleus. This Schizosaccharomyces pombe (strain 972 / ATCC 24843) (Fission yeast) protein is Pep5-like zinc finger protein C16A10.03c.